The sequence spans 204 residues: CASP-like protein 2A1 (204 aa).

Residues 1 to 11 (MEKSNDHDKAS) are compositionally biased toward basic and acidic residues. Positions 1–25 (MEKSNDHDKASHGGSGGGATEKWEE) are disordered. Residues 1-32 (MEKSNDHDKASHGGSGGGATEKWEETSPGIRT) are Cytoplasmic-facing. The helical transmembrane segment at 33–53 (AETMLRLAPVGLCVAALVVML) threads the bilayer. Residues 54–74 (KDSETNEFGSISYSNLTAFRY) lie on the Extracellular side of the membrane. An N-linked (GlcNAc...) asparagine glycan is attached at Asn68. Residues 75–95 (LVHANGICAGYSLLSAAIAAM) form a helical membrane-spanning segment. The Cytoplasmic portion of the chain corresponds to 96–113 (PRSSSTMPRVWTFFCLDQ). The helical transmembrane segment at 114-134 (LLTYLVLAAGAVSAEVLYLAY) threads the bilayer. Residues 135 to 155 (NGDSAITWSDACSSYGGFCHR) lie on the Extracellular side of the membrane. The chain crosses the membrane as a helical span at residues 156–176 (ATASVIITFFVVCFYILLSLI). At 177–204 (SSYKLFTRFDPPSIVDSDKTLEVAVFGS) the chain is on the cytoplasmic side.

This sequence belongs to the Casparian strip membrane proteins (CASP) family. As to quaternary structure, homodimer and heterodimers.

Its subcellular location is the cell membrane. This Arabidopsis lyrata subsp. lyrata (Lyre-leaved rock-cress) protein is CASP-like protein 2A1.